A 352-amino-acid polypeptide reads, in one-letter code: tRNA pseudouridine synthase D (352 aa).

Aspartate 78 serves as the catalytic Nucleophile. One can recognise a TRUD domain in the interval 153–299; that stretch reads GVPNYYGEQR…LDQDRRPLLL (147 aa).

This sequence belongs to the pseudouridine synthase TruD family.

The catalysed reaction is uridine(13) in tRNA = pseudouridine(13) in tRNA. Functionally, responsible for synthesis of pseudouridine from uracil-13 in transfer RNAs. The chain is tRNA pseudouridine synthase D from Aeromonas salmonicida (strain A449).